Consider the following 228-residue polypeptide: Phosphatidate cytidylyltransferase (228 aa).

Helical transmembrane passes span 31–51 (FVIA…LVGL), 65–85 (INYL…LIFL), 93–113 (LVIM…MIGG), 131–151 (WTGL…VSLI), 165–185 (IYLF…DLFI), and 206–226 (GVLD…CINI).

It belongs to the CDS family.

The protein localises to the cell membrane. It carries out the reaction a 1,2-diacyl-sn-glycero-3-phosphate + CTP + H(+) = a CDP-1,2-diacyl-sn-glycerol + diphosphate. The protein operates within phospholipid metabolism; CDP-diacylglycerol biosynthesis; CDP-diacylglycerol from sn-glycerol 3-phosphate: step 3/3. The chain is Phosphatidate cytidylyltransferase (cdsA) from Rickettsia prowazekii (strain Madrid E).